We begin with the raw amino-acid sequence, 311 residues long: Malate dehydrogenase (311 aa).

NAD(+) is bound by residues glycine 7–glycine 13 and aspartate 34. Arginine 81 and arginine 87 together coordinate substrate. NAD(+) contacts are provided by residues asparagine 94 and isoleucine 117–asparagine 119. Asparagine 119 and arginine 153 together coordinate substrate. Histidine 177 functions as the Proton acceptor in the catalytic mechanism. Methionine 227 is an NAD(+) binding site.

This sequence belongs to the LDH/MDH superfamily. MDH type 1 family. In terms of assembly, homodimer.

It carries out the reaction (S)-malate + NAD(+) = oxaloacetate + NADH + H(+). Functionally, catalyzes the reversible oxidation of malate to oxaloacetate. The chain is Malate dehydrogenase from Shewanella halifaxensis (strain HAW-EB4).